We begin with the raw amino-acid sequence, 190 residues long: Inner membrane-spanning protein YciB (190 aa).

6 helical membrane passes run 3 to 23 (FLFD…AGIY), 24 to 44 (VATT…WFKH), 49 to 69 (AMQW…LIFH), 76 to 96 (WKPT…VVVV), 121 to 141 (LVWA…AYNF), and 149 to 169 (FKLF…SVWL).

Belongs to the YciB family.

The protein resides in the cell inner membrane. Functionally, plays a role in cell envelope biogenesis, maintenance of cell envelope integrity and membrane homeostasis. This chain is Inner membrane-spanning protein YciB, found in Ralstonia pickettii (strain 12J).